The following is a 176-amino-acid chain: Conjugal transfer protein TraF (176 aa).

The N-terminal stretch at 1–23 (MRHRRALLFLTGAAVFVSALTAA) is a signal peptide.

Belongs to the peptidase S26C family.

It is found in the periplasm. In terms of biological role, involved in conjugal transfer of the plasmid. The polypeptide is Conjugal transfer protein TraF (traF) (Agrobacterium tumefaciens (strain 15955)).